The chain runs to 313 residues: Homoserine O-acetyltransferase (313 aa).

Cysteine 142 serves as the catalytic Acyl-thioester intermediate. Substrate contacts are provided by lysine 163 and serine 191. Histidine 234 functions as the Proton acceptor in the catalytic mechanism. Glutamate 236 is a catalytic residue. Arginine 248 provides a ligand contact to substrate.

The protein belongs to the MetA family.

It localises to the cytoplasm. It carries out the reaction L-homoserine + acetyl-CoA = O-acetyl-L-homoserine + CoA. It functions in the pathway amino-acid biosynthesis; L-methionine biosynthesis via de novo pathway; O-acetyl-L-homoserine from L-homoserine: step 1/1. Transfers an acetyl group from acetyl-CoA to L-homoserine, forming acetyl-L-homoserine. The polypeptide is Homoserine O-acetyltransferase (Streptococcus sanguinis (strain SK36)).